A 630-amino-acid chain; its full sequence is MDIKGQFWNDDDSEGDNESEEFLYGVQGSCAADLYRHPQLDADIEAVKEIYSENSVSIREYGTIDDVDIDLHINISFLDEEVSTAWKVLRTEPIVLRLRFSLSQYLDGPEPSIEVFQPSNKEGFGLGLQLKKILGMFTSQQWKHLSNDFLKTQQEKRHSWFKASGTIKKFRAGLSIFSPIPKSPSFPIIQDSMLKGKLGVPELRVGRLMNRSISCTMKNPKVEVFGYPPSPQAGLLCPQHVGLPPPARTSPLVSGHCKNIPTLEYGFLVQIMKYAEQRIPTLNEYCVVCDEQHVFQNGSMLKPAVCTRELCVFSFYTLGVMSGAAEEVATGAEVVDLLVAMCRAALESPRKSIIFEPYPSVVDPTDPKTLAFNPKKKNYERLQKALDSVMSIREMTQGSYLEIKKQMDKLDPLAHPLLQWIISSNRSHIVKLPLSRLKFMHTSHQFLLLSSPPAKEARFRTAKKLYGSTFAFHGSHIENWHSILRNGLVNASYTKLQLHGAAYGKGIYLSPISSISFGYSGMGKGQHRMPSKDELVQRYNRMNTIPQTRSIQSRFLQSRNLNCIALCEVITSKDLQKHGNIWVCPVSDHVCTRFFFVYEDGQVGDANINTQDPKIQKEIMRVIGTQVYTN.

ADP-ribosylcysteine is present on Cys237. Residues 394–620 (EMTQGSYLEI…QDPKIQKEIM (227 aa)) enclose the PARP catalytic domain. At Asp600 the chain carries ADP-ribosyl aspartic acid.

Belongs to the ARTD/PARP family. Auto-mono-ADP-ribosylated.

The enzyme catalyses L-aspartyl-[protein] + NAD(+) = 4-O-(ADP-D-ribosyl)-L-aspartyl-[protein] + nicotinamide. The catalysed reaction is L-cysteinyl-[protein] + NAD(+) = S-(ADP-D-ribosyl)-L-cysteinyl-[protein] + nicotinamide + H(+). In terms of biological role, mono-ADP-ribosyltransferase that mediates mono-ADP-ribosylation of target proteins. This chain is Protein mono-ADP-ribosyltransferase PARP6, found in Homo sapiens (Human).